Here is a 90-residue protein sequence, read N- to C-terminus: MSRALFAVVLAFPLIALANPHYRPDVEVNVPPEVFSSGGQSAQPCTQCCVYQDQNYSEGAVIKAEGILLQCQRDDKTLSTNPLVWRRVKP.

The N-terminal stretch at 1-18 is a signal peptide; the sequence is MSRALFAVVLAFPLIALA.

This is an uncharacterized protein from Escherichia coli (strain K12).